Consider the following 465-residue polypeptide: GTPase Der (465 aa).

EngA-type G domains follow at residues phenylalanine 3–tyrosine 166 and isoleucine 184–asparagine 358. GTP-binding positions include glycine 9–serine 16, aspartate 56–isoleucine 60, asparagine 118–aspartate 121, glycine 190–serine 197, aspartate 237–valine 241, and asparagine 302–aspartate 305. Positions lysine 359–glutamate 443 constitute a KH-like domain. A disordered region spans residues phenylalanine 446–lysine 465.

It belongs to the TRAFAC class TrmE-Era-EngA-EngB-Septin-like GTPase superfamily. EngA (Der) GTPase family. Associates with the 50S ribosomal subunit.

Functionally, GTPase that plays an essential role in the late steps of ribosome biogenesis. The polypeptide is GTPase Der (Francisella tularensis subsp. mediasiatica (strain FSC147)).